The following is a 145-amino-acid chain: MEQHYHQQNQLRQLKQQQLKELLQQQSKDKEEDEQKHDDYRSPTKTTTTTATSTSAATIQSPIKSNEEDDEIDNSQHNNDTLQISEPEGESEIEEIWEHAFDPLPTSVSKNSAENVTNLGGINARVFSLSKPIYHDPNKLDLLLI.

Positions 1–41 (MEQHYHQQNQLRQLKQQQLKELLQQQSKDKEEDEQKHDDYR) form a coiled coil. The disordered stretch occupies residues 1 to 91 (MEQHYHQQNQ…LQISEPEGES (91 aa)). Over residues 7–26 (QQNQLRQLKQQQLKELLQQQ) the composition is skewed to low complexity. Residues 27–42 (SKDKEEDEQKHDDYRS) show a composition bias toward basic and acidic residues. The span at 43 to 58 (PTKTTTTTATSTSAAT) shows a compositional bias: low complexity.

This is an uncharacterized protein from Dictyostelium discoideum (Social amoeba).